Here is a 348-residue protein sequence, read N- to C-terminus: Aldose 1-epimerase (348 aa).

Arg80 contributes to the substrate binding site. Residue His180 is the Proton donor of the active site. Asp243 contributes to the substrate binding site. Catalysis depends on Glu311, which acts as the Proton acceptor.

This sequence belongs to the aldose epimerase family.

The enzyme catalyses alpha-D-glucose = beta-D-glucose. It functions in the pathway carbohydrate metabolism; hexose metabolism. Functionally, mutarotase converts alpha-aldose to the beta-anomer. It is active on D-glucose, L-arabinose, D-xylose, D-galactose, maltose and lactose. This chain is Aldose 1-epimerase (galM), found in Streptococcus thermophilus.